A 168-amino-acid chain; its full sequence is Transcriptional repressor NrdR (168 aa).

The segment at 3–34 (CPFCQDAENKVIDSRESHEGSVIRRRRECLTC) is a zinc-finger region. One can recognise an ATP-cone domain in the interval 49–139 (PLIVKKDGRR…VYRSFRDIAE (91 aa)).

The protein belongs to the NrdR family. Zn(2+) serves as cofactor.

Negatively regulates transcription of bacterial ribonucleotide reductase nrd genes and operons by binding to NrdR-boxes. This chain is Transcriptional repressor NrdR, found in Myxococcus xanthus (strain DK1622).